Here is a 107-residue protein sequence, read N- to C-terminus: NADH dehydrogenase [ubiquinone] 1 beta subcomplex subunit 10-A (107 aa).

The tract at residues 1-23 (MGRKKGLPEFEESAPDGFDPENP) is disordered.

This sequence belongs to the complex I NDUFB10 subunit family. As to quaternary structure, complex I is composed of at least 49 different subunits.

The protein localises to the mitochondrion inner membrane. In terms of biological role, accessory subunit of the mitochondrial membrane respiratory chain NADH dehydrogenase (Complex I), that is believed not to be involved in catalysis. Complex I functions in the transfer of electrons from NADH to the respiratory chain. The immediate electron acceptor for the enzyme is believed to be ubiquinone. In Arabidopsis thaliana (Mouse-ear cress), this protein is NADH dehydrogenase [ubiquinone] 1 beta subcomplex subunit 10-A.